The primary structure comprises 172 residues: 3-hydroxydecanoyl-[acyl-carrier-protein] dehydratase (172 aa).

Histidine 71 is an active-site residue.

This sequence belongs to the thioester dehydratase family. FabA subfamily. As to quaternary structure, homodimer.

The protein resides in the cytoplasm. The enzyme catalyses a (3R)-hydroxyacyl-[ACP] = a (2E)-enoyl-[ACP] + H2O. It carries out the reaction (3R)-hydroxydecanoyl-[ACP] = (2E)-decenoyl-[ACP] + H2O. It catalyses the reaction (2E)-decenoyl-[ACP] = (3Z)-decenoyl-[ACP]. It functions in the pathway lipid metabolism; fatty acid biosynthesis. Its function is as follows. Necessary for the introduction of cis unsaturation into fatty acids. Catalyzes the dehydration of (3R)-3-hydroxydecanoyl-ACP to E-(2)-decenoyl-ACP and then its isomerization to Z-(3)-decenoyl-ACP. Can catalyze the dehydratase reaction for beta-hydroxyacyl-ACPs with saturated chain lengths up to 16:0, being most active on intermediate chain length. The sequence is that of 3-hydroxydecanoyl-[acyl-carrier-protein] dehydratase from Brucella abortus (strain S19).